Consider the following 283-residue polypeptide: Secretory carrier-associated membrane protein 2 (283 aa).

The disordered stretch occupies residues 1-47; that stretch reads MARHDPNPFADEEINPFANHTSVPPASNSYLKPLPPEPYDRGATVDI. Residues 1-123 lie on the Cytoplasmic side of the membrane; that stretch reads MARHDPNPFA…LQKIQYVAFT (123 aa). The span at 18–30 shows a compositional bias: polar residues; that stretch reads ANHTSVPPASNSY. Residues 50–87 adopt a coiled-coil conformation; it reads DSGNDLRAKEMELQAKENELKRKEQELKRREDAIARTG. 4 consecutive transmembrane segments (helical) span residues 124 to 144, 151 to 171, 186 to 206, and 234 to 254; these read TLLG…VAWI, IWLL…VLWY, FGAF…AAVA, and IMYF…IWVI. The Cytoplasmic portion of the chain corresponds to 255–283; the sequence is QQVYAYFRGSGKAAEMKREATKSTLMRAL.

It belongs to the SCAMP family.

The protein localises to the cell membrane. The protein resides in the cytoplasmic vesicle. It is found in the secretory vesicle membrane. Its function is as follows. Probably involved in membrane trafficking. In Arabidopsis thaliana (Mouse-ear cress), this protein is Secretory carrier-associated membrane protein 2 (SCAMP2).